The chain runs to 230 residues: GTP cyclohydrolase III (230 aa).

This sequence belongs to the archaeal-type GTP cyclohydrolase family.

The catalysed reaction is GTP + 3 H2O = 2-amino-5-formylamino-6-(5-phospho-D-ribosylamino)pyrimidin-4(3H)-one + 2 phosphate + 2 H(+). Functionally, catalyzes the formation of 2-amino-5-formylamino-6-ribofuranosylamino-4(3H)-pyrimidinone ribonucleotide monophosphate and inorganic phosphate from GTP. Also has an independent pyrophosphate phosphohydrolase activity. This chain is GTP cyclohydrolase III, found in Saccharolobus islandicus (strain M.16.27) (Sulfolobus islandicus).